The primary structure comprises 213 residues: MTARNKRVRCKICGILELEHALAVSDAGGDAIGFVFYPPSPRYIDPAAASRIIAKLPPFITTVGLFVNHSAEQVREILNVVPLDVLQFHGNEDNDFCRSFSRPFYKAIGVGDETDVVAEAAKYPDAAALLFDTHDPQLRGGTGRVFDWSRIRHELGKPVILAGGLNPTNVAEAIRTVRPYAVDVSGGVEASKGVKSIELIQEFIGEVYREYEV.

This sequence belongs to the TrpF family.

The enzyme catalyses N-(5-phospho-beta-D-ribosyl)anthranilate = 1-(2-carboxyphenylamino)-1-deoxy-D-ribulose 5-phosphate. The protein operates within amino-acid biosynthesis; L-tryptophan biosynthesis; L-tryptophan from chorismate: step 3/5. The protein is N-(5'-phosphoribosyl)anthranilate isomerase of Hahella chejuensis (strain KCTC 2396).